Consider the following 67-residue polypeptide: Small ribosomal subunit protein bS21 (67 aa).

The protein belongs to the bacterial ribosomal protein bS21 family.

The chain is Small ribosomal subunit protein bS21 from Oleidesulfovibrio alaskensis (strain ATCC BAA-1058 / DSM 17464 / G20) (Desulfovibrio alaskensis).